A 471-amino-acid polypeptide reads, in one-letter code: Methylenetetrahydrofolate--tRNA-(uracil-5-)-methyltransferase TrmFO (471 aa).

13 to 18 (GGGLAG) contacts FAD.

This sequence belongs to the MnmG family. TrmFO subfamily. The cofactor is FAD.

The protein localises to the cytoplasm. It catalyses the reaction uridine(54) in tRNA + (6R)-5,10-methylene-5,6,7,8-tetrahydrofolate + NADH + H(+) = 5-methyluridine(54) in tRNA + (6S)-5,6,7,8-tetrahydrofolate + NAD(+). The catalysed reaction is uridine(54) in tRNA + (6R)-5,10-methylene-5,6,7,8-tetrahydrofolate + NADPH + H(+) = 5-methyluridine(54) in tRNA + (6S)-5,6,7,8-tetrahydrofolate + NADP(+). Functionally, catalyzes the folate-dependent formation of 5-methyl-uridine at position 54 (M-5-U54) in all tRNAs. This is Methylenetetrahydrofolate--tRNA-(uracil-5-)-methyltransferase TrmFO from Azorhizobium caulinodans (strain ATCC 43989 / DSM 5975 / JCM 20966 / LMG 6465 / NBRC 14845 / NCIMB 13405 / ORS 571).